The sequence spans 335 residues: Mevalonate kinase (335 aa).

111–121 contributes to the ATP binding site; the sequence is PVGAGLGSSAA. Catalysis depends on D162, which acts as the Proton acceptor.

The protein belongs to the GHMP kinase family. Mevalonate kinase subfamily. As to quaternary structure, homodimer. Mg(2+) is required as a cofactor.

Its subcellular location is the cytoplasm. The catalysed reaction is (R)-mevalonate + ATP = (R)-5-phosphomevalonate + ADP + H(+). It participates in isoprenoid biosynthesis; isopentenyl diphosphate biosynthesis via mevalonate pathway; isopentenyl diphosphate from (R)-mevalonate: step 1/3. Functionally, catalyzes the phosphorylation of (R)-mevalonate (MVA) to (R)-mevalonate 5-phosphate (MVAP). Functions in the mevalonate (MVA) pathway leading to isopentenyl diphosphate (IPP), a key precursor for the biosynthesis of isoprenoid compounds such as archaeal membrane lipids. This chain is Mevalonate kinase, found in Pyrococcus abyssi (strain GE5 / Orsay).